We begin with the raw amino-acid sequence, 122 residues long: UPF0382 membrane protein SAUSA300_0565 (122 aa).

The next 4 membrane-spanning stretches (helical) occupy residues 3-23, 46-66, 69-89, and 98-118; these read LFII…AFGA, MYHG…SINV, AGWL…ILVL, and ITPI…IATF.

The protein belongs to the UPF0382 family.

The protein resides in the cell membrane. The sequence is that of UPF0382 membrane protein SAUSA300_0565 from Staphylococcus aureus (strain USA300).